Here is a 339-residue protein sequence, read N- to C-terminus: Phenylalanine--tRNA ligase alpha subunit (339 aa).

Glutamate 254 lines the Mg(2+) pocket.

Belongs to the class-II aminoacyl-tRNA synthetase family. Phe-tRNA synthetase alpha subunit type 1 subfamily. In terms of assembly, tetramer of two alpha and two beta subunits. Mg(2+) serves as cofactor.

It localises to the cytoplasm. The catalysed reaction is tRNA(Phe) + L-phenylalanine + ATP = L-phenylalanyl-tRNA(Phe) + AMP + diphosphate + H(+). This chain is Phenylalanine--tRNA ligase alpha subunit, found in Clostridium botulinum (strain Langeland / NCTC 10281 / Type F).